The primary structure comprises 1052 residues: Carbamoyl phosphate synthase large chain (1052 aa).

Residues 1–399 (MRENVKRVLV…ALQKAVRMLD (399 aa)) form a carboxyphosphate synthetic domain region. R127, R167, G173, G174, K206, L208, E213, G239, V240, H241, Q282, and E296 together coordinate ATP. Positions 131–325 (RETMINVNLP…LAYVSAKLAL (195 aa)) constitute an ATP-grasp 1 domain. Mg(2+) contacts are provided by Q282, E296, and N298. The Mn(2+) site is built by Q282, E296, and N298. The oligomerization domain stretch occupies residues 400 to 548 (LGEPGIIGGK…VTYNGTEDDI (149 aa)). The carbamoyl phosphate synthetic domain stretch occupies residues 549–930 (EFSNGIRKLL…LKSWLSSSPN (382 aa)). Residues 674 to 864 (SRLLDKLGIK…IIDLALTGVI (191 aa)) enclose the ATP-grasp 2 domain. Residues R710, K749, I751, E756, G780, V781, H782, S783, Q823, and E835 each contribute to the ATP site. Positions 823, 835, and 837 each coordinate Mg(2+). Residues Q823, E835, and N837 each coordinate Mn(2+). The region spanning 930-1052 (NRLPDQKGIA…YEIGEYGAGI (123 aa)) is the MGS-like domain. The interval 931 to 1052 (RLPDQKGIAL…YEIGEYGAGI (122 aa)) is allosteric domain.

Belongs to the CarB family. In terms of assembly, composed of two chains; the small (or glutamine) chain promotes the hydrolysis of glutamine to ammonia, which is used by the large (or ammonia) chain to synthesize carbamoyl phosphate. Tetramer of heterodimers (alpha,beta)4. Mg(2+) is required as a cofactor. Requires Mn(2+) as cofactor.

The catalysed reaction is hydrogencarbonate + L-glutamine + 2 ATP + H2O = carbamoyl phosphate + L-glutamate + 2 ADP + phosphate + 2 H(+). It carries out the reaction hydrogencarbonate + NH4(+) + 2 ATP = carbamoyl phosphate + 2 ADP + phosphate + 2 H(+). It functions in the pathway amino-acid biosynthesis; L-arginine biosynthesis; carbamoyl phosphate from bicarbonate: step 1/1. The protein operates within pyrimidine metabolism; UMP biosynthesis via de novo pathway; (S)-dihydroorotate from bicarbonate: step 1/3. Large subunit of the glutamine-dependent carbamoyl phosphate synthetase (CPSase). CPSase catalyzes the formation of carbamoyl phosphate from the ammonia moiety of glutamine, carbonate, and phosphate donated by ATP, constituting the first step of 2 biosynthetic pathways, one leading to arginine and/or urea and the other to pyrimidine nucleotides. The large subunit (synthetase) binds the substrates ammonia (free or transferred from glutamine from the small subunit), hydrogencarbonate and ATP and carries out an ATP-coupled ligase reaction, activating hydrogencarbonate by forming carboxy phosphate which reacts with ammonia to form carbamoyl phosphate. The protein is Carbamoyl phosphate synthase large chain of Sulfolobus acidocaldarius (strain ATCC 33909 / DSM 639 / JCM 8929 / NBRC 15157 / NCIMB 11770).